Consider the following 236-residue polypeptide: Class B acid phosphatase (236 aa).

The first 23 residues, 1-23 (MRKLTLTLSALALALSLNSVADA), serve as a signal peptide directing secretion. Asp-68 serves as the catalytic Nucleophile. 2 residues coordinate Mg(2+): Asp-68 and Asp-70. The Proton donor role is filled by Asp-70. Residues 136–137 (TG) and Lys-176 contribute to the substrate site. Residue Asp-191 participates in Mg(2+) binding.

This sequence belongs to the class B bacterial acid phosphatase family. In terms of assembly, homotetramer. Mg(2+) serves as cofactor.

Its subcellular location is the periplasm. It carries out the reaction a phosphate monoester + H2O = an alcohol + phosphate. With respect to regulation, activated by ethanol. Also activated by Co(2+), Zn(2+) and glycerol. Inhibited by EDTA, inorganic phosphate, nucleosides and Ca(2+). Unaffected by fluoride and tartrate. In terms of biological role, dephosphorylates several organic phosphate monoesters including 5'-AMP, 3'-AMP, pNPP, PDP, 5'-UMP, 3'-UMP, G2P, glucose 6-P and ribose 5-P. No activity toward organic phosphate diesters. Also has a phosphotransferase activity catalyzing the transfer of low-energy phosphate groups from organic phosphate monoesters to free hydroxyl groups of various organic compounds. In Morganella morganii (Proteus morganii), this protein is Class B acid phosphatase (aphA).